A 139-amino-acid polypeptide reads, in one-letter code: Trafficking protein particle complex subunit 2-like protein (139 aa).

It belongs to the TRAPP small subunits family. Sedlin subfamily. As to quaternary structure, component of the multisubunit TRAPP (transport protein particle) complex, which includes at least TRAPPC2, TRAPPC2L, TRAPPC3, TRAPPC3L, TRAPPC4, TRAPPC5, TRAPPC8, TRAPPC9, TRAPPC10, TRAPPC11 and TRAPPC12. Interacts with the heterodimer TRAPPC3-TRAPPC6A.

It localises to the cytoplasm. The protein resides in the perinuclear region. It is found in the endoplasmic reticulum. The protein localises to the golgi apparatus. In terms of biological role, may play a role in vesicular transport from endoplasmic reticulum to Golgi. The polypeptide is Trafficking protein particle complex subunit 2-like protein (Trappc2l) (Rattus norvegicus (Rat)).